The primary structure comprises 474 residues: MFIRSNRRAKIVATVGPASSSPAILRSLFLAGVDTFRLNFSHGSRDDHAAAYRHIRALEKELGTSIGILQDLQGPKIRIGVLHEGRLQLTKDAEIRFVCGTEPGRGLMDIPLPHREIFAAVKPGDDLLIDDGRVRVRALGVSDEFIDAKVIVAGPISNRKGVNLPGTVLDISPLTPKDRKDLEFGLELGVDWIALSFVQTARDMIEARSLVSDRAGLIAKIEKPSALDEIDDIVALSDAIMVARGDLGVEIPPEDVPGRQKELIRACRIAAKPVIVATQMLDSMVTSPTPTRAEASDVAGAIYDGADAVMLSAESATGAFPVETVEIMSRIIEKTEKHKFYRPILEATEPQIAHTPPHAVATAAADVALALKAPVIVAFTVSGTTASRISRARPPLPILALTPSEQTARQLGLMWGVVSLLSPTVDTYEQSVDRATQAAVQTGLAEKSDQIVVVTGFPFATAGSTNNLRVTQAG.

Residue Arg37 participates in substrate binding. Residues Asn39, Ser41, and Asp71 each contribute to the K(+) site. 39–42 (NFSH) contacts ATP. ATP is bound by residues Arg78 and Lys160. Glu222 lines the Mg(2+) pocket. The substrate site is built by Gly245, Asp246, and Thr278. Asp246 contacts Mg(2+).

This sequence belongs to the pyruvate kinase family. In terms of assembly, homotetramer. Mg(2+) is required as a cofactor. It depends on K(+) as a cofactor.

The enzyme catalyses pyruvate + ATP = phosphoenolpyruvate + ADP + H(+). It participates in carbohydrate degradation; glycolysis; pyruvate from D-glyceraldehyde 3-phosphate: step 5/5. The polypeptide is Pyruvate kinase (ttuE) (Agrobacterium vitis (Rhizobium vitis)).